A 243-amino-acid polypeptide reads, in one-letter code: 1-(5-phosphoribosyl)-5-[(5-phosphoribosylamino)methylideneamino] imidazole-4-carboxamide isomerase (243 aa).

D8 serves as the catalytic Proton acceptor. The Proton donor role is filled by D129.

Belongs to the HisA/HisF family.

The protein localises to the cytoplasm. The catalysed reaction is 1-(5-phospho-beta-D-ribosyl)-5-[(5-phospho-beta-D-ribosylamino)methylideneamino]imidazole-4-carboxamide = 5-[(5-phospho-1-deoxy-D-ribulos-1-ylimino)methylamino]-1-(5-phospho-beta-D-ribosyl)imidazole-4-carboxamide. Its pathway is amino-acid biosynthesis; L-histidine biosynthesis; L-histidine from 5-phospho-alpha-D-ribose 1-diphosphate: step 4/9. In Azorhizobium caulinodans (strain ATCC 43989 / DSM 5975 / JCM 20966 / LMG 6465 / NBRC 14845 / NCIMB 13405 / ORS 571), this protein is 1-(5-phosphoribosyl)-5-[(5-phosphoribosylamino)methylideneamino] imidazole-4-carboxamide isomerase.